Here is a 476-residue protein sequence, read N- to C-terminus: Glutamyl-tRNA(Gln) amidotransferase subunit A (476 aa).

Catalysis depends on charge relay system residues lysine 70 and serine 145. Serine 169 acts as the Acyl-ester intermediate in catalysis.

The protein belongs to the amidase family. GatA subfamily. Heterotrimer of A, B and C subunits.

It catalyses the reaction L-glutamyl-tRNA(Gln) + L-glutamine + ATP + H2O = L-glutaminyl-tRNA(Gln) + L-glutamate + ADP + phosphate + H(+). Its function is as follows. Allows the formation of correctly charged Gln-tRNA(Gln) through the transamidation of misacylated Glu-tRNA(Gln) in organisms which lack glutaminyl-tRNA synthetase. The reaction takes place in the presence of glutamine and ATP through an activated gamma-phospho-Glu-tRNA(Gln). The polypeptide is Glutamyl-tRNA(Gln) amidotransferase subunit A (Methanosarcina mazei (strain ATCC BAA-159 / DSM 3647 / Goe1 / Go1 / JCM 11833 / OCM 88) (Methanosarcina frisia)).